A 61-amino-acid chain; its full sequence is Small ribosomal subunit protein eS30A (61 aa).

A disordered region spans residues 1–36 (MGKVHGSLARAGKVKSQTPKVEKQEKPKQPKGRAYK).

This sequence belongs to the eukaryotic ribosomal protein eS30 family. As to quaternary structure, component of the small ribosomal subunit (SSU). Mature yeast ribosomes consist of a small (40S) and a large (60S) subunit. The 40S small subunit contains 1 molecule of ribosomal RNA (18S rRNA) and at least 33 different proteins. The large 60S subunit contains 3 rRNA molecules (25S, 5.8S and 5S rRNA) and at least 46 different proteins.

The protein resides in the cytoplasm. It localises to the nucleus. Functionally, component of the ribosome, a large ribonucleoprotein complex responsible for the synthesis of proteins in the cell. The small ribosomal subunit (SSU) binds messenger RNAs (mRNAs) and translates the encoded message by selecting cognate aminoacyl-transfer RNA (tRNA) molecules. The large subunit (LSU) contains the ribosomal catalytic site termed the peptidyl transferase center (PTC), which catalyzes the formation of peptide bonds, thereby polymerizing the amino acids delivered by tRNAs into a polypeptide chain. The nascent polypeptides leave the ribosome through a tunnel in the LSU and interact with protein factors that function in enzymatic processing, targeting, and the membrane insertion of nascent chains at the exit of the ribosomal tunnel. The chain is Small ribosomal subunit protein eS30A (rps3001) from Schizosaccharomyces pombe (strain 972 / ATCC 24843) (Fission yeast).